Consider the following 251-residue polypeptide: Cell division protein ZapD (251 aa).

The protein belongs to the ZapD family. As to quaternary structure, interacts with FtsZ.

Its subcellular location is the cytoplasm. Functionally, cell division factor that enhances FtsZ-ring assembly. Directly interacts with FtsZ and promotes bundling of FtsZ protofilaments, with a reduction in FtsZ GTPase activity. This chain is Cell division protein ZapD, found in Burkholderia vietnamiensis (strain G4 / LMG 22486) (Burkholderia cepacia (strain R1808)).